A 234-amino-acid chain; its full sequence is RNA chaperone ProQ (234 aa).

Residues 104–130 (LEEAKARVQAQRDARKREAAENGEKRE) show a composition bias toward basic and acidic residues. Residues 104–186 (LEEAKARVQA…QRSTPVTSLE (83 aa)) form a disordered region. Positions 131 to 142 (PRRPRPAGKKPT) are enriched in basic residues. Basic and acidic residues-rich tracts occupy residues 143–156 (ARRDGEQGSKEVRK) and 163–176 (TSERKPRAKSETTE). Positions 177 to 186 (QRSTPVTSLE) are enriched in polar residues.

It belongs to the ProQ family.

Its subcellular location is the cytoplasm. Functionally, RNA chaperone with significant RNA binding, RNA strand exchange and RNA duplexing activities. May regulate ProP activity through an RNA-based, post-transcriptional mechanism. In Edwardsiella ictaluri (strain 93-146), this protein is RNA chaperone ProQ.